Reading from the N-terminus, the 393-residue chain is MTNSNRIKLTWISFLSYALTGALVIVTGMVMGNIADYFNLPVSSMSNTFTFLNAGILISIFLNAWLMEIVPLKTQLRFGFLLMVLAVAGLMFSHSLALFSAAMFILGVVSGITMSIGTFLITQMYEGRQRGSRLLFTDSFFSMAGMIFPMIAAFLLARSIEWYWVYACIGLVYVAIFILTFGCEFPALGKHAPKTDAPVEKEKWGIGVLFLSIAALCYILGQLGFISWVPEYAKGLGMSLNDAGTLVSNFWMSYMVGMWAFSFILRFFDLQRILTVLAGLAAILMYVFNTGTPAHMAWSILALGFFSSAIYTTIITLGSQQTKVPSPKLVNFVLTCGTIGTMLTFVVTGPIVEHSGPQAALLTANGLYAVVFVMCFLLGFVSRHRQHNTLTSH.

12 consecutive transmembrane segments (helical) span residues Trp11–Met31, Phe51–Pro71, Phe78–Leu98, Ala101–Ile121, Leu134–Phe154, Trp162–Gly182, Ile206–Ile226, Thr245–Leu265, Ile273–Pro293, Ala297–Leu317, Phe332–Val352, and Leu361–Val381.

Belongs to the major facilitator superfamily. TsgA family.

The protein resides in the cell inner membrane. The chain is Protein TsgA from Escherichia coli O7:K1 (strain IAI39 / ExPEC).